A 251-amino-acid polypeptide reads, in one-letter code: NADPH-dependent oxidoreductase (251 aa).

Belongs to the flavin oxidoreductase frp family. Requires FMN as cofactor.

Its function is as follows. Reduces FMN, organic nitro compounds and disulfide DTNB. Involved in maintenance of the cellular redox state and the disulfide stress response. The protein is NADPH-dependent oxidoreductase (nfrA) of Staphylococcus aureus (strain MRSA252).